Consider the following 528-residue polypeptide: GMP synthase [glutamine-hydrolyzing] (528 aa).

The Glutamine amidotransferase type-1 domain occupies 13–204 (AIVILDFGSQ…VYHICGCEPD (192 aa)). C90 serves as the catalytic Nucleophile. Catalysis depends on residues H178 and E180. The GMPS ATP-PPase domain occupies 205–403 (WTTSAFIDEA…LGLPEEIVRR (199 aa)). 232-238 (SGGVDSS) contributes to the ATP binding site.

As to quaternary structure, homodimer.

It carries out the reaction XMP + L-glutamine + ATP + H2O = GMP + L-glutamate + AMP + diphosphate + 2 H(+). It functions in the pathway purine metabolism; GMP biosynthesis; GMP from XMP (L-Gln route): step 1/1. In terms of biological role, catalyzes the synthesis of GMP from XMP. This is GMP synthase [glutamine-hydrolyzing] from Parasynechococcus marenigrum (strain WH8102).